A 104-amino-acid polypeptide reads, in one-letter code: Large ribosomal subunit protein uL24 (104 aa).

This sequence belongs to the universal ribosomal protein uL24 family. In terms of assembly, part of the 50S ribosomal subunit.

Its function is as follows. One of two assembly initiator proteins, it binds directly to the 5'-end of the 23S rRNA, where it nucleates assembly of the 50S subunit. In terms of biological role, one of the proteins that surrounds the polypeptide exit tunnel on the outside of the subunit. This is Large ribosomal subunit protein uL24 from Nitrobacter hamburgensis (strain DSM 10229 / NCIMB 13809 / X14).